A 462-amino-acid chain; its full sequence is Stabilizer of axonemal microtubules 1 (462 aa).

Mn regions lie at residues 30–64 (KPCFFSEYTEKYPTYLSYVPRESFKPKLEYQKVNI), 65–97 (PMEGLSTTKRDFGTFNIVPVKHHLPEKATPIQD), 98–131 (EMDFLTTYNQHYNYCPANRVNPIKPRDNKHQCND), 132–165 (KMECVPTYKADYLPWNQQKRSSIRPPQSYRPASC), 166–199 (RFDHRTTHQDDYPIKNPVDTVSYKPPHGPKLCNI), 200–232 (PLESMTSYKSSYVAHPMEKRCVYEGEKYKPSEV), 233–266 (PFDSLTTHKDSYRGLIGEPAKTWKPAPNHPGLDI), 267–299 (PFPSNTEFREKFQPWPTPKIVPKESIAYIPPEG), 300–332 (KMDLLTTVQADYKCPNGVPAQSCRPVIHLKKSD), 333–366 (RFESSTTNREDFKHWANIRREPVKPNHQLKFSDE), 367–400 (PMEYMTTNRAHYVPHAPANTKSCKPTWSGPRVNI), and 401–434 (PLEGQTTYSTSFTPKEIQRCPASYPEPPGYIFDE).

Belongs to the FAM154 family. In terms of assembly, associates with microtubules via the Mn regions.

It is found in the cytoplasm. The protein localises to the cytoskeleton. Its subcellular location is the microtubule organizing center. The protein resides in the centrosome. It localises to the centriole. It is found in the cilium basal body. The protein localises to the cilium axoneme. Functionally, may play a role in the regulation of cilium length. Stabilizes microtubules at low temperature. The sequence is that of Stabilizer of axonemal microtubules 1 (Saxo1) from Rattus norvegicus (Rat).